A 376-amino-acid polypeptide reads, in one-letter code: Chanoclavine-I aldehyde reductase easA (376 aa).

FMN is bound by residues proline 29–threonine 31, alanine 64, glutamine 106, and histidine 173. Substrate is bound by residues histidine 173 and asparagine 176. Residue tyrosine 178 is the Proton donor of the active site. Residues lysine 225, glycine 297, glycine 323–arginine 324, and arginine 324 each bind FMN. Residue tyrosine 351 coordinates substrate.

Belongs to the NADH:flavin oxidoreductase/NADH oxidase family. FMN serves as cofactor.

It catalyses the reaction dihydrochanoclavine-I aldehyde + NADP(+) = chanoclavine-I aldehyde + NADPH + H(+). The protein operates within alkaloid biosynthesis; ergot alkaloid biosynthesis. In terms of biological role, aldehyde reductase; part of the gene cluster that mediates the biosynthesis of fumiclavanine C, a fungal ergot alkaloid. DmaW catalyzes the first step of ergot alkaloid biosynthesis by condensing dimethylallyl diphosphate (DMAP) and tryptophan to form 4-dimethylallyl-L-tryptophan. The second step is catalyzed by the methyltransferase easF that methylates 4-dimethylallyl-L-tryptophan in the presence of S-adenosyl-L-methionine, resulting in the formation of 4-dimethylallyl-L-abrine. The catalase easC and the FAD-dependent oxidoreductase easE then transform 4-dimethylallyl-L-abrine to chanoclavine-I which is further oxidized by EasD in the presence of NAD(+), resulting in the formation of chanoclavine-I aldehyde. EasA reduces chanoclavine-I aldehyde to dihydrochanoclavine-I aldehyde that spontaneously dehydrates to form 6,8-dimethyl-6,7-didehydroergoline. EasG then catalyzes the reduction of 6,8-dimethyl-6,7-didehydroergoline to form festuclavine. Hydrolysis of festuclavine by easM then leads to the formation of fumigaclavine B which is in turn acetylated by easN to fumigaclavine A. Finally, easL catalyzes the conversion of fumigaclavine A into fumigaclavine C by attaching a dimethylallyl moiety to C-2 of the indole nucleus. The chain is Chanoclavine-I aldehyde reductase easA from Aspergillus fumigatus (strain ATCC MYA-4609 / CBS 101355 / FGSC A1100 / Af293) (Neosartorya fumigata).